The primary structure comprises 444 residues: NADH-dependent flavin oxidoreductase nadA (444 aa).

FMN contacts are provided by residues 37-40 and Gln-123; that span reads ERMC. A disordered region spans residues 127-149; it reads PGRQTPSHRQPEPISASDVPLDT. 192 to 195 lines the substrate pocket; sequence HAAH. Position 345–346 (345–346) interacts with FMN; it reads AR.

Belongs to the NADH:flavin oxidoreductase/NADH oxidase family.

It is found in the cytoplasm. The protein resides in the cytosol. Its function is as follows. NADH-dependent flavin oxidoreductase; part of the gene cluster that mediates the biosynthesis of aflatoxins, a group of polyketide-derived furanocoumarins, and part of the most toxic and carcinogenic compounds among the known mycotoxins. The four major aflatoxins produced by A.parasiticus are aflatoxin B1 (AFB1), aflatoxin B2 (AFB2), aflatoxin G1 (AFG1) and aflatoxin G2 (AFG2). Within the aflatoxin pathway, the NADH-dependent flavin oxidoreductase nadA is specifically required for the last steps in which OMST is converted specifically to aflatoxin G1. The biosynthesis of aflatoxins begins with the norsolorinic acid synthase aflC that combines a hexanoyl starter unit produced by the fatty acid synthase aflA/aflB and 7 malonyl-CoA extender units to synthesize the precursor NOR. The second step is the conversion of NOR to averantin and requires the norsolorinic acid ketoreductase aflD, which catalyzes the dehydration of norsolorinic acid to form (1'S)-averantin. The norsolorinic acid reductases aflE and aflF may also play a role in the conversion of NOR to AVN. The cytochrome P450 monooxygenase aflG then catalyzes the hydroxylation of AVN to 5'hydroxyaverantin (HAVN). The next step is performed by the 5'-hydroxyaverantin dehydrogenase aflH that transforms HAVN to 5'-oxoaverantin (OAVN) which is further converted to averufin (AVF) by aflK that plays a dual role in the pathway, as a 5'-oxoaverantin cyclase that mediates conversion of 5'-oxoaverantin, as well as a versicolorin B synthase in a later step in the pathway. The averufin oxidase aflI catalyzes the conversion of AVF to versiconal hemiacetal acetate (VHA). VHA is then the substrate for the versiconal hemiacetal acetate esterase aflJ to yield versiconal (VAL). Versicolorin B synthase aflK then converts VAL to versicolorin B (VERB) by closing the bisfuran ring of aflatoxin which is required for DNA-binding, thus giving to aflatoxin its activity as a mutagen. Then, the activity of the versicolorin B desaturase aflL leads to versicolorin A (VERA). A branch point starts from VERB since it can also be converted to dihydrodemethylsterigmatocystin (DMDHST), probably also by aflL, VERA being a precursor for aflatoxins B1 and G1, and DMDHST for aflatoxins B2 and G2. Next, the versicolorin reductase aflM and the cytochrome P450 monooxygenase aflN are involved in conversion of VERA to demethylsterigmatocystin (DMST). AflX and aflY seem also involved in this step, through probable aflX-mediated epoxide ring-opening step following versicolorin A oxidation and aflY-mediated Baeyer-Villiger oxidation required for the formation of the xanthone ring. The methyltransferase aflO then leads to the modification of DMST to sterigmatocystin (ST), and of DMDHST to dihydrosterigmatocystin (DHST). Both ST and DHST are then substrates of the O-methyltransferase aflP to yield O-methylsterigmatocystin (OMST) and dihydro-O-methylsterigmatocystin (DHOMST), respectively. Finally OMST is converted to aflatoxins B1 and G1, and DHOMST to aflatoxins B2 and G2, via the action of several enzymes including O-methylsterigmatocystin oxidoreductase aflQ, the cytochrome P450 monooxygenase aflU, but also the NADH-dependent flavin oxidoreductase nadA which is specifically required for the synthesis of AFG1. The polypeptide is NADH-dependent flavin oxidoreductase nadA (Aspergillus parasiticus (strain ATCC 56775 / NRRL 5862 / SRRC 143 / SU-1)).